The sequence spans 299 residues: tRNA dimethylallyltransferase (299 aa).

Gly-13–Thr-20 is an ATP binding site. Substrate is bound at residue Thr-15–Thr-20. The interaction with substrate tRNA stretch occupies residues Asp-38 to Gln-41.

The protein belongs to the IPP transferase family. As to quaternary structure, monomer. Requires Mg(2+) as cofactor.

The catalysed reaction is adenosine(37) in tRNA + dimethylallyl diphosphate = N(6)-dimethylallyladenosine(37) in tRNA + diphosphate. Functionally, catalyzes the transfer of a dimethylallyl group onto the adenine at position 37 in tRNAs that read codons beginning with uridine, leading to the formation of N6-(dimethylallyl)adenosine (i(6)A). The chain is tRNA dimethylallyltransferase from Prochlorococcus marinus (strain MIT 9312).